Reading from the N-terminus, the 357-residue chain is Glucose-6-phosphatase catalytic subunit 1 (357 aa).

At 1-28 (MEKGMDVLHDFGIQSTHYLQVNYQDSQD) the chain is on the lumenal side. The chain crosses the membrane as a helical span at residues 29–49 (WFILVSVIADLRNAFYVLFPI). Over 50–60 (WFHLREAVGIK) the chain is Cytoplasmic. The chain crosses the membrane as a helical span at residues 61–81 (LLWVAVIGDWLNLVFKWILFG). Topologically, residues 82-117 (QRPYWWVMDTDYYSNTSVPLIKQFPVTCETGPGSPS) are lumenal. Arg83 lines the substrate pocket. Asn96 carries N-linked (GlcNAc...) asparagine glycosylation. Residues 118–138 (GHAMGTAGVYYVMVTSTLSIF) traverse the membrane as a helical segment. Catalysis depends on His119, which acts as the Proton donor. Residues 139-147 (RGRKRPTYR) are Cytoplasmic-facing. A helical transmembrane segment spans residues 148–168 (FRCLNILLWLGFWAVQLNVCL). Residues 169–170 (SR) lie on the Lumenal side of the membrane. Arg170 is a substrate binding site. The helical transmembrane segment at 171–191 (IYLAAHFPHQVVAGVLSGIAV) threads the bilayer. The Nucleophile role is filled by His176. At 192–209 (AETFRHIQSIYNASLKKY) the chain is on the cytoplasmic side. A helical transmembrane segment spans residues 210–230 (FLITFFLFSFAIGFYLLLKGL). Residues 231–254 (GVDLLWTLEKARRWCERPEWVHID) lie on the Lumenal side of the membrane. The helical transmembrane segment at 255-275 (TTPFASLLKNVGTLFGLGVTL) threads the bilayer. Over 276–291 (NSSMYRESCKGKLSKW) the chain is Cytoplasmic. A helical membrane pass occupies residues 292–312 (FPFRLSCIVVSLILLHLFDSL). At 313–320 (KPPSQTEL) the chain is on the lumenal side. Residues 321-341 (IFYTLSFCKSAAVPLASVSLI) traverse the membrane as a helical segment. The Cytoplasmic portion of the chain corresponds to 342–357 (PYCLARVFDQPDKKSL). A Prevents secretion from ER motif is present at residues 354 to 357 (KKSL).

This sequence belongs to the glucose-6-phosphatase family.

It localises to the endoplasmic reticulum membrane. It carries out the reaction D-glucose 6-phosphate + H2O = D-glucose + phosphate. The protein operates within carbohydrate biosynthesis; gluconeogenesis. Functionally, hydrolyzes glucose-6-phosphate to glucose in the endoplasmic reticulum. Forms with the glucose-6-phosphate transporter (SLC37A4/G6PT) the complex responsible for glucose production in the terminal step of glycogenolysis and gluconeogenesis. Hence, it is the key enzyme in homeostatic regulation of blood glucose levels. In Canis lupus familiaris (Dog), this protein is Glucose-6-phosphatase catalytic subunit 1 (G6PC1).